The primary structure comprises 106 residues: Somatoliberin (106 aa).

A signal peptide spans 1–19 (MLLWVFFLVTLTLSSGSHG). Positions 20–30 (SLPSQPLRIPR) are excised as a propeptide. Leucine 74 is modified (leucine amide). Residues 77-106 (QVDGVWTDQQQMALESTLVSLLQERRNSQG) constitute a propeptide that is removed on maturation.

Belongs to the glucagon family.

Its subcellular location is the secreted. Its function is as follows. GRF is released by the hypothalamus and acts on the adenohypophyse to stimulate the secretion of growth hormone. The sequence is that of Somatoliberin (GHRH) from Bos taurus (Bovine).